The chain runs to 534 residues: MANVDLTKYGITGTTEIVHNPSYETLFEEETKAGLEGYEVGKETELGAVNVMTGIYTGRSPKDKYIVMDENSKDTVWWNTPEYPNDNHPMKEDVWATVKDLAKKELCNKKLFVVDAFCGANKDTRMAVRFIVEVAWQAHFVTNMFIQPSAEELENFEPDFVVYNASKAKVENYKELGLNSETCVAFNITSKEQVIINTWYGGEMKKGMFSMMNYYLPLKGIASMHCSANADMNGENTAIFFGLSGTGKTTLSTDPKRLLIGDDEHGWDDNGVFNFEGGCYAKVIGLDKESEPDIYNAIRRDALLENVTVADDGKIDFEDKSVTENTRVSYPINHITNIVKPVSSAPAAKNVIFLSADAFGVLPPVSILTPEQTQYYFLSGFTAKLAGTERGITEPTPTFSACFGQAFLELHPTKYAAELVKKMEKSGAKAYLVNTGWNGTGKRITIKDTRGIIDAILSGDILNAPTKKIPMFDFEVPTELPGVDSGILDPRDTYADASEWEAKAKDLAERFNKNFVKYTTNEAGKALVAAGPQL.

Arginine 59, tyrosine 200, and lysine 206 together coordinate substrate. ATP is bound by residues lysine 206, histidine 225, and 242-250; that span reads GLSGTGKTT. Mn(2+)-binding residues include lysine 206 and histidine 225. Aspartate 263 provides a ligand contact to Mn(2+). ATP is bound by residues glutamate 291, arginine 327, 443–444, and threonine 449; that span reads RI. Arginine 327 contacts substrate.

The protein belongs to the phosphoenolpyruvate carboxykinase (ATP) family. Requires Mn(2+) as cofactor.

The protein localises to the cytoplasm. The enzyme catalyses oxaloacetate + ATP = phosphoenolpyruvate + ADP + CO2. It functions in the pathway carbohydrate biosynthesis; gluconeogenesis. Functionally, involved in the gluconeogenesis. Catalyzes the conversion of oxaloacetate (OAA) to phosphoenolpyruvate (PEP) through direct phosphoryl transfer between the nucleoside triphosphate and OAA. The sequence is that of Phosphoenolpyruvate carboxykinase (ATP) from Agathobacter rectalis (strain ATCC 33656 / DSM 3377 / JCM 17463 / KCTC 5835 / VPI 0990) (Eubacterium rectale).